We begin with the raw amino-acid sequence, 123 residues long: Fluoride-specific ion channel FluC (123 aa).

A run of 4 helical transmembrane segments spans residues 7–27 (LLLI…SGIL), 39–59 (LVNS…FFGF), 67–87 (IFLG…SYET), and 100–120 (FMNV…GFIL). Positions 75 and 78 each coordinate Na(+).

It belongs to the fluoride channel Fluc/FEX (TC 1.A.43) family.

Its subcellular location is the cell membrane. It catalyses the reaction fluoride(in) = fluoride(out). Its activity is regulated as follows. Na(+) is not transported, but it plays an essential structural role and its presence is essential for fluoride channel function. Functionally, fluoride-specific ion channel. Important for reducing fluoride concentration in the cell, thus reducing its toxicity. This is Fluoride-specific ion channel FluC from Pyrococcus abyssi (strain GE5 / Orsay).